The chain runs to 393 residues: Probable alpha-1,6-mannosyltransferase MNN10 (393 aa).

Topologically, residues 1–52 (MSSVPYNSQLPISNHLEYDEDEKKSRGSKLGLKYKMIYWRKTLCSSLARWRK) are cytoplasmic. Residues 53–73 (LILLISLALFLFIWISDSTIS) traverse the membrane as a helical; Signal-anchor for type II membrane protein segment. Over 74 to 393 (RNPSTTSFQG…RKWYTRFFFP (320 aa)) the chain is Lumenal. Positions 77 to 97 (STTSFQGQNSNDNKLSNTGSS) are disordered.

The protein belongs to the glycosyltransferase 34 family. In terms of assembly, component of the M-Pol II complex composed of ANP1, MNN9, MNN10, MNN11 and HOC1.

It is found in the endoplasmic reticulum membrane. Its subcellular location is the golgi apparatus. The protein resides in the cis-Golgi network membrane. Its function is as follows. Required for polarized growth and efficient budding. In terms of biological role, the M-Pol II complex possesses alpha-1,6-mannosyltransferase activity and is probably involved in the elongation of the mannan backbone of N-linked glycans on cell wall and periplasmic proteins. This chain is Probable alpha-1,6-mannosyltransferase MNN10 (MNN10), found in Saccharomyces cerevisiae (strain ATCC 204508 / S288c) (Baker's yeast).